Consider the following 459-residue polypeptide: Zinc finger protein ZFP2 (459 aa).

13 consecutive C2H2-type zinc fingers follow at residues 100–122, 128–150, 156–178, 184–206, 212–234, 240–262, 268–290, 296–318, 324–346, 352–374, 380–402, 408–430, and 436–458; these read YGCD…QRIH, YTCN…QRTH, YKCH…QRTH, YQCK…ERIH, YECN…QRSH, YECS…QRNH, YKCN…QRLH, FECN…RRIH, YECM…QVIH, YECT…QRIH, YECD…QRIH, and YQCN…QRTH.

It belongs to the krueppel C2H2-type zinc-finger protein family.

The protein resides in the nucleus. Its function is as follows. Probable transcription factor involved in neuronal differentiation and/or phenotypic maintenance. The protein is Zinc finger protein ZFP2 (Zfp2) of Mus musculus (Mouse).